Here is a 61-residue protein sequence, read N- to C-terminus: Sperm protamine P1 (61 aa).

The interval 1–61 (MARYRHSRSR…RYSRRRRRRY (61 aa)) is disordered.

The protein belongs to the protamine P1 family. As to expression, testis.

The protein localises to the nucleus. Its subcellular location is the chromosome. Its function is as follows. Protamines substitute for histones in the chromatin of sperm during the haploid phase of spermatogenesis. They compact sperm DNA into a highly condensed, stable and inactive complex. The protein is Sperm protamine P1 (PRM1) of Setonix brachyurus (Quokka).